The sequence spans 557 residues: UvrABC system protein C (557 aa).

One can recognise a GIY-YIG domain in the interval 14–89; that stretch reads EEPGVYIFKN…IKKYRPKYNV (76 aa). The region spanning 194–229 is the UVR domain; the sequence is EEVFDYLKEKMETHSRMLDFENAAKYRDLLLNLSNV.

The protein belongs to the UvrC family. In terms of assembly, interacts with UvrB in an incision complex.

The protein resides in the cytoplasm. In terms of biological role, the UvrABC repair system catalyzes the recognition and processing of DNA lesions. UvrC both incises the 5' and 3' sides of the lesion. The N-terminal half is responsible for the 3' incision and the C-terminal half is responsible for the 5' incision. The chain is UvrABC system protein C from Thermotoga petrophila (strain ATCC BAA-488 / DSM 13995 / JCM 10881 / RKU-1).